A 368-amino-acid polypeptide reads, in one-letter code: Ribulose bisphosphate carboxylase-like protein 1 (368 aa).

It belongs to the RuBisCO large chain family. Type IV subfamily.

In terms of biological role, unknown. Probably does not have RuBisCO activity. This chain is Ribulose bisphosphate carboxylase-like protein 1 (rlp1), found in Rhodopseudomonas palustris (strain ATCC BAA-98 / CGA009).